Consider the following 196-residue polypeptide: Protein GrpE (196 aa).

The segment at 1-39 (MSSKEQKTPEGQAPEEIIMDQHEEIEAVEPEASAEQVDP) is disordered.

This sequence belongs to the GrpE family. Homodimer.

The protein resides in the cytoplasm. Functionally, participates actively in the response to hyperosmotic and heat shock by preventing the aggregation of stress-denatured proteins, in association with DnaK and GrpE. It is the nucleotide exchange factor for DnaK and may function as a thermosensor. Unfolded proteins bind initially to DnaJ; upon interaction with the DnaJ-bound protein, DnaK hydrolyzes its bound ATP, resulting in the formation of a stable complex. GrpE releases ADP from DnaK; ATP binding to DnaK triggers the release of the substrate protein, thus completing the reaction cycle. Several rounds of ATP-dependent interactions between DnaJ, DnaK and GrpE are required for fully efficient folding. The chain is Protein GrpE from Escherichia coli (strain SMS-3-5 / SECEC).